A 231-amino-acid chain; its full sequence is NADH-ubiquinone oxidoreductase chain 4 (231 aa).

6 helical membrane-spanning segments follow: residues proline 1–isoleucine 21, methionine 34–leucine 54, isoleucine 63–glycine 85, alanine 89–tyrosine 111, isoleucine 128–proline 148, and phenylalanine 156–serine 176.

It belongs to the complex I subunit 4 family.

Its subcellular location is the mitochondrion membrane. The enzyme catalyses a ubiquinone + NADH + 5 H(+)(in) = a ubiquinol + NAD(+) + 4 H(+)(out). Functionally, core subunit of the mitochondrial membrane respiratory chain NADH dehydrogenase (Complex I) that is believed to belong to the minimal assembly required for catalysis. Complex I functions in the transfer of electrons from NADH to the respiratory chain. The immediate electron acceptor for the enzyme is believed to be ubiquinone. This is NADH-ubiquinone oxidoreductase chain 4 (MT-ND4) from Bothriechis schlegelii (Eyelash palm pitviper).